The following is a 524-amino-acid chain: Homeobox protein engrailed-like SMOX-2 (524 aa).

The tract at residues 194 to 218 (SSSSSSSSSSSSSSSSSSCSTNSSS) is disordered. The homeobox DNA-binding region spans 423–482 (LKRPRTSFTVPQLKRLSQEFEKNRYLDELRRKKLATELDLRESQVKIWFQNKRAKTKKAS).

The protein belongs to the engrailed homeobox family.

It is found in the nucleus. This is Homeobox protein engrailed-like SMOX-2 (SMOX-2) from Schistosoma mansoni (Blood fluke).